A 444-amino-acid polypeptide reads, in one-letter code: Tubulin beta-4 chain (444 aa).

Residues Gln-11, Glu-69, Ser-138, Gly-142, Thr-143, Gly-144, Asn-204, and Asn-226 each coordinate GTP. Mg(2+) is bound at residue Glu-69.

Belongs to the tubulin family. In terms of assembly, dimer of alpha and beta chains. A typical microtubule is a hollow water-filled tube with an outer diameter of 25 nm and an inner diameter of 15 nM. Alpha-beta heterodimers associate head-to-tail to form protofilaments running lengthwise along the microtubule wall with the beta-tubulin subunit facing the microtubule plus end conferring a structural polarity. Microtubules usually have 13 protofilaments but different protofilament numbers can be found in some organisms and specialized cells. Mg(2+) is required as a cofactor.

It localises to the cytoplasm. It is found in the cytoskeleton. Tubulin is the major constituent of microtubules, a cylinder consisting of laterally associated linear protofilaments composed of alpha- and beta-tubulin heterodimers. Microtubules grow by the addition of GTP-tubulin dimers to the microtubule end, where a stabilizing cap forms. Below the cap, tubulin dimers are in GDP-bound state, owing to GTPase activity of alpha-tubulin. This chain is Tubulin beta-4 chain (TUBB4), found in Arabidopsis thaliana (Mouse-ear cress).